Here is a 218-residue protein sequence, read N- to C-terminus: Ohanin-like protein (218 aa).

Residues methionine 1–glutamine 40 form the signal peptide. The propeptide occupies glutamate 41–alanine 48. The 107-residue stretch at serine 49–leucine 155 folds into the B30.2/SPRY domain. Residues arginine 156–leucine 218 constitute a propeptide that is removed on maturation.

The protein belongs to the ohanin/vespryn family. As to expression, expressed by the venom gland.

Its subcellular location is the secreted. Functionally, neurotoxin that produces dose-dependent hypolocomotion and hyperalgesia in mice. May directly act on the central nervous system, as it is 6500-fold more potent when administered intracerebroventricularly than intraperitoneal. The protein is Ohanin-like protein of Lachesis muta muta (Bushmaster).